A 150-amino-acid polypeptide reads, in one-letter code: Transmembrane protein 35B (150 aa).

Positions 1 to 21 are cleaved as a signal peptide; it reads MSFRVGVLRVLLGVFFALTGA. The next 3 membrane-spanning stretches (helical) occupy residues 62–82, 84–104, and 111–131; these read TAVG…PPVL, EISN…LVVL, and YVPA…HFLA.

Belongs to the DoxX family.

The protein resides in the membrane. This Mus musculus (Mouse) protein is Transmembrane protein 35B.